The chain runs to 274 residues: Large ribosomal subunit protein uL2 (274 aa).

Residues Arg-221–Lys-274 are disordered.

It belongs to the universal ribosomal protein uL2 family. In terms of assembly, part of the 50S ribosomal subunit. Forms a bridge to the 30S subunit in the 70S ribosome.

In terms of biological role, one of the primary rRNA binding proteins. Required for association of the 30S and 50S subunits to form the 70S ribosome, for tRNA binding and peptide bond formation. It has been suggested to have peptidyltransferase activity; this is somewhat controversial. Makes several contacts with the 16S rRNA in the 70S ribosome. In Yersinia enterocolitica, this protein is Large ribosomal subunit protein uL2.